We begin with the raw amino-acid sequence, 602 residues long: Serine/threonine-protein phosphatase 2A 56 kDa regulatory subunit delta isoform (602 aa).

Positions 1–13 (MPYKLKKEKEPPK) are enriched in basic and acidic residues. The disordered stretch occupies residues 1-96 (MPYKLKKEKE…QSSSRFNLSK (96 aa)). 5 tandem repeats follow at residues 37–38 (QP), 39–40 (QP), 41–42 (QP), 43–44 (QP), and 45–46 (QP). The 8 X 2 AA approximate tandem repeats of Q-P stretch occupies residues 37-52 (QPQPQPQPQPQAQSQP). A compositionally biased stretch (low complexity) spans 46-55 (PQAQSQPPSS). The stretch at 47–48 (QA) is one 6; approximate repeat. The stretch at 49 to 50 (QS) is one 7; approximate repeat. The stretch at 51-52 (QP) is repeat 8. Threonine 63 is subject to Phosphothreonine. Phosphoserine occurs at positions 88, 89, and 90. An SH3-binding; class I motif is present at residues 523 to 530 (RAPPPLPP). The short motif at 548 to 565 (KRTVETEAVQMLKDIKKE) is the Nuclear localization signal element. A phosphoserine mark is found at serine 573 and serine 598.

It belongs to the phosphatase 2A regulatory subunit B56 family. As to quaternary structure, PP2A consists of a common heterodimeric core enzyme, composed of a 36 kDa catalytic subunit (subunit C) and a 65 kDa constant regulatory subunit (PR65 or subunit A), that associates with a variety of regulatory subunits. Proteins that associate with the core dimer include three families of regulatory subunits B (the R2/B/PR55/B55, R3/B''/PR72/PR130/PR59 and R5/B'/B56 families), the 48 kDa variable regulatory subunit, viral proteins, and cell signaling molecules. Interacts with the PP2A A subunit PPP2R1A. Interacts with SGO1. Interacts with ADCY8. As to expression, isoform Delta-2 is widely expressed. Isoform Delta-1 is highly expressed in brain.

It localises to the cytoplasm. It is found in the nucleus. In terms of biological role, the B regulatory subunit might modulate substrate selectivity and catalytic activity, and might also direct the localization of the catalytic enzyme to a particular subcellular compartment. The chain is Serine/threonine-protein phosphatase 2A 56 kDa regulatory subunit delta isoform (PPP2R5D) from Homo sapiens (Human).